The primary structure comprises 341 residues: uncharacterized protein (341 aa).

Transmembrane regions (helical) follow at residues 6 to 26 (IIAG…TTLW), 63 to 83 (LLLC…WVLI), and 137 to 157 (AQGL…LSAV).

It is found in the cell membrane. This is an uncharacterized protein from Bacillus subtilis (strain 168).